We begin with the raw amino-acid sequence, 184 residues long: Transposon Tn917 resolvase (184 aa).

A Resolvase/invertase-type recombinase catalytic domain is found at 1–134 (MIFGYARVST…SGLKAARVRG (134 aa)). The O-(5'-phospho-DNA)-serine intermediate role is filled by Ser9. The H-T-H motif DNA-binding region spans 161-180 (IRQILDASKLSKTTFYRYLN).

Belongs to the site-specific recombinase resolvase family.

Functionally, resolvase catalyzes the resolution (a site-specific recombination) of the cointegrated replicon to yield the final transposition products. This Enterococcus faecalis (Streptococcus faecalis) protein is Transposon Tn917 resolvase (tnpR).